A 40-amino-acid polypeptide reads, in one-letter code: Photosystem II reaction center protein J (40 aa).

The chain crosses the membrane as a helical span at residues 8–28; it reads IPLWIIGTVAGILVIGLVGVF.

This sequence belongs to the PsbJ family. In terms of assembly, PSII is composed of 1 copy each of membrane proteins PsbA, PsbB, PsbC, PsbD, PsbE, PsbF, PsbH, PsbI, PsbJ, PsbK, PsbL, PsbM, PsbT, PsbX, PsbY, PsbZ, Psb30/Ycf12, at least 3 peripheral proteins of the oxygen-evolving complex and a large number of cofactors. It forms dimeric complexes.

The protein localises to the plastid. Its subcellular location is the chloroplast thylakoid membrane. In terms of biological role, one of the components of the core complex of photosystem II (PSII). PSII is a light-driven water:plastoquinone oxidoreductase that uses light energy to abstract electrons from H(2)O, generating O(2) and a proton gradient subsequently used for ATP formation. It consists of a core antenna complex that captures photons, and an electron transfer chain that converts photonic excitation into a charge separation. This chain is Photosystem II reaction center protein J, found in Helianthus annuus (Common sunflower).